A 149-amino-acid polypeptide reads, in one-letter code: D-aminoacyl-tRNA deacylase (149 aa).

The Gly-cisPro motif, important for rejection of L-amino acids signature appears at 137 to 138; it reads GP.

The protein belongs to the DTD family. As to quaternary structure, homodimer.

The protein localises to the cytoplasm. It catalyses the reaction glycyl-tRNA(Ala) + H2O = tRNA(Ala) + glycine + H(+). The enzyme catalyses a D-aminoacyl-tRNA + H2O = a tRNA + a D-alpha-amino acid + H(+). Functionally, an aminoacyl-tRNA editing enzyme that deacylates mischarged D-aminoacyl-tRNAs. Also deacylates mischarged glycyl-tRNA(Ala), protecting cells against glycine mischarging by AlaRS. Acts via tRNA-based rather than protein-based catalysis; rejects L-amino acids rather than detecting D-amino acids in the active site. By recycling D-aminoacyl-tRNA to D-amino acids and free tRNA molecules, this enzyme counteracts the toxicity associated with the formation of D-aminoacyl-tRNA entities in vivo and helps enforce protein L-homochirality. This is D-aminoacyl-tRNA deacylase from Desulfotalea psychrophila (strain LSv54 / DSM 12343).